Reading from the N-terminus, the 140-residue chain is MSDQGNEHANHDGIDNAGLSAEVGSGPEAKRTRDEPPEQTASDEAVSNQSPDSTIGLSDAQVRAREAAKELLEYEFEGIIKIEAANGDGWRTVVELVERNAVPDTQDIIGRYEITLDATGSVTGYELLERYRRGDMKEEL.

The span at 1–14 (MSDQGNEHANHDGI) shows a compositional bias: basic and acidic residues. Residues 1-61 (MSDQGNEHAN…DSTIGLSDAQ (61 aa)) are disordered. The segment covering 39–56 (QTASDEAVSNQSPDSTIG) has biased composition (polar residues).

It belongs to the gas vesicle GvpO family. As to quaternary structure, forms homodimers, forms a GvpN-GvpO heterodimer, interacts with GvpC, GvpF, GvpI and GvpL, might interact with GvpA.

It is found in the gas vesicle. The protein localises to the cytoplasm. Functionally, a minor component of the gas vesicle (GV), may play a role in transcription and/or RNA stability and/or in GV assembly. Gas vesicles are small, hollow, gas filled protein structures found in some microorganisms. They allow positioning of halobacteria at the optimal depth for growth in the poorly aerated shallow brine pools of their habitat. In terms of biological role, expression of a 9.5 kb mc-vac DNA fragment containing 2 divergently transcribed regions (gvpD-gvpE-gvpF-gvpG-gvpH-gvpI-gvpJ-gvpK-gvpL-gvpM and gvpA-gvpC-gvpN-gvpO) allows H.volcanii to produce gas vesicles. This is Gas vesicle protein O from Haloferax mediterranei (strain ATCC 33500 / DSM 1411 / JCM 8866 / NBRC 14739 / NCIMB 2177 / R-4) (Halobacterium mediterranei).